A 221-amino-acid chain; its full sequence is Protein-L-isoaspartate O-methyltransferase (221 aa).

Ser-64 is an active-site residue.

Belongs to the methyltransferase superfamily. L-isoaspartyl/D-aspartyl protein methyltransferase family.

The protein localises to the cytoplasm. It carries out the reaction [protein]-L-isoaspartate + S-adenosyl-L-methionine = [protein]-L-isoaspartate alpha-methyl ester + S-adenosyl-L-homocysteine. Catalyzes the methyl esterification of L-isoaspartyl residues in peptides and proteins that result from spontaneous decomposition of normal L-aspartyl and L-asparaginyl residues. It plays a role in the repair and/or degradation of damaged proteins. This is Protein-L-isoaspartate O-methyltransferase from Thermococcus sibiricus (strain DSM 12597 / MM 739).